A 244-amino-acid chain; its full sequence is Probable 2-phosphosulfolactate phosphatase (244 aa).

This sequence belongs to the ComB family. The cofactor is Mg(2+).

It catalyses the reaction (2R)-O-phospho-3-sulfolactate + H2O = (2R)-3-sulfolactate + phosphate. This chain is Probable 2-phosphosulfolactate phosphatase, found in Thermosynechococcus vestitus (strain NIES-2133 / IAM M-273 / BP-1).